A 67-amino-acid chain; its full sequence is N-(5'-phosphoribosyl)anthranilate isomerase (67 aa).

The protein belongs to the TrpF family.

It carries out the reaction N-(5-phospho-beta-D-ribosyl)anthranilate = 1-(2-carboxyphenylamino)-1-deoxy-D-ribulose 5-phosphate. Its pathway is amino-acid biosynthesis; L-tryptophan biosynthesis; L-tryptophan from chorismate: step 3/5. The polypeptide is N-(5'-phosphoribosyl)anthranilate isomerase (trpF) (Methanococcus voltae).